A 62-amino-acid polypeptide reads, in one-letter code: uncharacterized protein (62 aa).

Residues 28 to 61 (KIESTHPEIAKKLKEAAEKYREVEEILKKAVDMV) adopt a coiled-coil conformation.

This is an uncharacterized protein from Archaeoglobus fulgidus (strain ATCC 49558 / DSM 4304 / JCM 9628 / NBRC 100126 / VC-16).